A 345-amino-acid polypeptide reads, in one-letter code: Phosphoribosylformylglycinamidine cyclo-ligase (345 aa).

This sequence belongs to the AIR synthase family.

The protein localises to the cytoplasm. It carries out the reaction 2-formamido-N(1)-(5-O-phospho-beta-D-ribosyl)acetamidine + ATP = 5-amino-1-(5-phospho-beta-D-ribosyl)imidazole + ADP + phosphate + H(+). It functions in the pathway purine metabolism; IMP biosynthesis via de novo pathway; 5-amino-1-(5-phospho-D-ribosyl)imidazole from N(2)-formyl-N(1)-(5-phospho-D-ribosyl)glycinamide: step 2/2. This is Phosphoribosylformylglycinamidine cyclo-ligase from Shewanella oneidensis (strain ATCC 700550 / JCM 31522 / CIP 106686 / LMG 19005 / NCIMB 14063 / MR-1).